Reading from the N-terminus, the 631-residue chain is 1,4-alpha-glucan branching enzyme GlgB (631 aa).

Catalysis depends on Asp309, which acts as the Nucleophile. Glu362 (proton donor) is an active-site residue.

Belongs to the glycosyl hydrolase 13 family. GlgB subfamily. In terms of assembly, monomer.

It catalyses the reaction Transfers a segment of a (1-&gt;4)-alpha-D-glucan chain to a primary hydroxy group in a similar glucan chain.. It functions in the pathway glycan biosynthesis; glycogen biosynthesis. In terms of biological role, catalyzes the formation of the alpha-1,6-glucosidic linkages in glycogen by scission of a 1,4-alpha-linked oligosaccharide from growing alpha-1,4-glucan chains and the subsequent attachment of the oligosaccharide to the alpha-1,6 position. This is 1,4-alpha-glucan branching enzyme GlgB from Marinobacter nauticus (strain ATCC 700491 / DSM 11845 / VT8) (Marinobacter aquaeolei).